The following is a 179-amino-acid chain: Bifunctional protein PyrR (179 aa).

Residues valine 99–threonine 111 carry the PRPP-binding motif.

It belongs to the purine/pyrimidine phosphoribosyltransferase family. PyrR subfamily. As to quaternary structure, homodimer and homohexamer; in equilibrium.

It carries out the reaction UMP + diphosphate = 5-phospho-alpha-D-ribose 1-diphosphate + uracil. Functionally, regulates transcriptional attenuation of the pyrimidine nucleotide (pyr) operon by binding in a uridine-dependent manner to specific sites on pyr mRNA. This disrupts an antiterminator hairpin in the RNA and favors formation of a downstream transcription terminator, leading to a reduced expression of downstream genes. In terms of biological role, also displays a weak uracil phosphoribosyltransferase activity which is not physiologically significant. This is Bifunctional protein PyrR from Latilactobacillus sakei subsp. sakei (strain 23K) (Lactobacillus sakei subsp. sakei).